The chain runs to 338 residues: Ketol-acid reductoisomerase (NADP(+)) (338 aa).

In terms of domain architecture, KARI N-terminal Rossmann spans 1–181; the sequence is MKVYYENDAD…GGTKAGVIET (181 aa). NADP(+)-binding positions include 24–27, Lys47, Ser50, Ser52, and 82–85; these read FGSQ and DQVQ. The active site involves His107. Gly133 serves as a coordination point for NADP(+). Residues 182–327 enclose the KARI C-terminal knotted domain; it reads NFKDETETDL…EKLRGMMSWL (146 aa). Mg(2+) contacts are provided by Asp190, Glu194, Glu226, and Glu230. Ser251 contributes to the substrate binding site.

Belongs to the ketol-acid reductoisomerase family. It depends on Mg(2+) as a cofactor.

It carries out the reaction (2R)-2,3-dihydroxy-3-methylbutanoate + NADP(+) = (2S)-2-acetolactate + NADPH + H(+). The catalysed reaction is (2R,3R)-2,3-dihydroxy-3-methylpentanoate + NADP(+) = (S)-2-ethyl-2-hydroxy-3-oxobutanoate + NADPH + H(+). Its pathway is amino-acid biosynthesis; L-isoleucine biosynthesis; L-isoleucine from 2-oxobutanoate: step 2/4. It participates in amino-acid biosynthesis; L-valine biosynthesis; L-valine from pyruvate: step 2/4. In terms of biological role, involved in the biosynthesis of branched-chain amino acids (BCAA). Catalyzes an alkyl-migration followed by a ketol-acid reduction of (S)-2-acetolactate (S2AL) to yield (R)-2,3-dihydroxy-isovalerate. In the isomerase reaction, S2AL is rearranged via a Mg-dependent methyl migration to produce 3-hydroxy-3-methyl-2-ketobutyrate (HMKB). In the reductase reaction, this 2-ketoacid undergoes a metal-dependent reduction by NADPH to yield (R)-2,3-dihydroxy-isovalerate. The protein is Ketol-acid reductoisomerase (NADP(+)) of Chloroherpeton thalassium (strain ATCC 35110 / GB-78).